Here is a 332-residue protein sequence, read N- to C-terminus: 3'(2'),5'-bisphosphate nucleotidase (332 aa).

The active-site Proton acceptor is Asp-49. Glu-73, Asp-129, Ile-131, and Asp-132 together coordinate Mg(2+). Thr-134 serves as the catalytic Proton acceptor. Positions 134, 245, 248, 262, and 274 each coordinate adenosine 3',5'-bisphosphate. Ser-245, Lys-248, Arg-262, and Asp-274 together coordinate AMP. Position 274 (Asp-274) interacts with Mg(2+).

This sequence belongs to the inositol monophosphatase superfamily. The cofactor is Mg(2+).

It catalyses the reaction 3'-phosphoadenylyl sulfate + H2O = adenosine 5'-phosphosulfate + phosphate. The catalysed reaction is adenosine 3',5'-bisphosphate + H2O = AMP + phosphate. The enzyme catalyses adenosine 2',5'-bisphosphate + H2O = AMP + phosphate. It carries out the reaction 1D-myo-inositol 1,4-bisphosphate + H2O = 1D-myo-inositol 4-phosphate + phosphate. It catalyses the reaction 1D-myo-inositol 1,3,4-trisphosphate + H2O = 1D-myo-inositol 3,4-bisphosphate + phosphate. Phosphatase that converts adenosine 3'-phosphate 5'-phosphosulfate (PAPS) to adenosine 5'-phosphosulfate (APS) and 3'(2')-phosphoadenosine 5'-phosphate (PAP) to AMP. Is also able to hydrolyze inositol 1,4-bisphosphate and inositol 1,3,4-trisphosphate. This chain is 3'(2'),5'-bisphosphate nucleotidase, found in Dictyostelium discoideum (Social amoeba).